An 836-amino-acid chain; its full sequence is Serine/threonine-protein kinase ATG1 (836 aa).

A Protein kinase domain is found at Tyr-21 to Val-321. ATP contacts are provided by residues Ile-27–Val-35 and Lys-50. The active-site Proton acceptor is the Asp-168. Disordered regions lie at residues Glu-387–Arg-425, Asn-458–Arg-489, and Cys-619–Ala-642. A compositionally biased stretch (low complexity) spans Leu-395–Gln-404. 3 stretches are compositionally biased toward polar residues: residues Arg-411–Arg-425, Asn-459–Ala-468, and Gly-630–Pro-640. The segment at Ile-571–Ser-836 is interaction with ATG13.

This sequence belongs to the protein kinase superfamily. Ser/Thr protein kinase family. APG1/unc-51/ULK1 subfamily. Homodimer. Dimerization requires the presence of ATG13. Forms a ternary complex with ATG13 and ATG17.

It is found in the cytoplasm. Its subcellular location is the preautophagosomal structure membrane. The catalysed reaction is L-seryl-[protein] + ATP = O-phospho-L-seryl-[protein] + ADP + H(+). It catalyses the reaction L-threonyl-[protein] + ATP = O-phospho-L-threonyl-[protein] + ADP + H(+). Functionally, serine/threonine protein kinase involved in the cytoplasm to vacuole transport (Cvt) and found to be essential in autophagy, where it is required for the formation of autophagosomes. Involved in the clearance of protein aggregates which cannot be efficiently cleared by the proteasome. Required for selective autophagic degradation of the nucleus (nucleophagy) as well as for mitophagy which contributes to regulate mitochondrial quantity and quality by eliminating the mitochondria to a basal level to fulfill cellular energy requirements and preventing excess ROS production. Also involved in endoplasmic reticulum-specific autophagic process, in selective removal of ER-associated degradation (ERAD) substrates. Plays a key role in ATG9 and ATG23 cycling through the pre-autophagosomal structure and is necessary to promote ATG18 binding to ATG9 through phosphorylation of ATG9. Catalyzes phosphorylation of ATG4, decreasing the interaction between ATG4 and ATG8 and impairing deconjugation of PE-conjugated forms of ATG8. The polypeptide is Serine/threonine-protein kinase ATG1 (Kluyveromyces marxianus (strain DMKU3-1042 / BCC 29191 / NBRC 104275) (Yeast)).